A 131-amino-acid polypeptide reads, in one-letter code: Small ribosomal subunit protein eS6 (131 aa).

Positions 76-95 (APPGFKPKRKGERRRKTVRG) are disordered. The segment covering 81 to 93 (KPKRKGERRRKTV) has biased composition (basic residues).

It belongs to the eukaryotic ribosomal protein eS6 family.

This chain is Small ribosomal subunit protein eS6, found in Methanocaldococcus jannaschii (strain ATCC 43067 / DSM 2661 / JAL-1 / JCM 10045 / NBRC 100440) (Methanococcus jannaschii).